The chain runs to 429 residues: Adenylosuccinate synthetase (429 aa).

Residues 12-18 and 40-42 contribute to the GTP site; these read GDEGKGK and GHT. Residue aspartate 13 is the Proton acceptor of the active site. Mg(2+)-binding residues include aspartate 13 and glycine 40. Residues 13–16, 38–41, threonine 128, arginine 142, glutamine 223, threonine 238, and arginine 302 contribute to the IMP site; these read DEGK and NAGH. Histidine 41 (proton donor) is an active-site residue. 298–304 lines the substrate pocket; that stretch reads TTTGRPR. GTP contacts are provided by residues arginine 304, 330 to 332, and 412 to 414; these read SID and SVG.

This sequence belongs to the adenylosuccinate synthetase family. As to quaternary structure, homodimer. Mg(2+) serves as cofactor.

The protein resides in the cytoplasm. The catalysed reaction is IMP + L-aspartate + GTP = N(6)-(1,2-dicarboxyethyl)-AMP + GDP + phosphate + 2 H(+). It participates in purine metabolism; AMP biosynthesis via de novo pathway; AMP from IMP: step 1/2. In terms of biological role, plays an important role in the de novo pathway of purine nucleotide biosynthesis. Catalyzes the first committed step in the biosynthesis of AMP from IMP. This is Adenylosuccinate synthetase from Lysinibacillus sphaericus (strain C3-41).